The primary structure comprises 323 residues: Acetyl-coenzyme A carboxylase carboxyl transferase subunit alpha (323 aa).

The CoA carboxyltransferase C-terminal domain occupies R39–Q293.

Belongs to the AccA family. In terms of assembly, acetyl-CoA carboxylase is a heterohexamer composed of biotin carboxyl carrier protein (AccB), biotin carboxylase (AccC) and two subunits each of ACCase subunit alpha (AccA) and ACCase subunit beta (AccD).

Its subcellular location is the cytoplasm. It catalyses the reaction N(6)-carboxybiotinyl-L-lysyl-[protein] + acetyl-CoA = N(6)-biotinyl-L-lysyl-[protein] + malonyl-CoA. Its pathway is lipid metabolism; malonyl-CoA biosynthesis; malonyl-CoA from acetyl-CoA: step 1/1. Component of the acetyl coenzyme A carboxylase (ACC) complex. First, biotin carboxylase catalyzes the carboxylation of biotin on its carrier protein (BCCP) and then the CO(2) group is transferred by the carboxyltransferase to acetyl-CoA to form malonyl-CoA. The protein is Acetyl-coenzyme A carboxylase carboxyl transferase subunit alpha of Cupriavidus metallidurans (strain ATCC 43123 / DSM 2839 / NBRC 102507 / CH34) (Ralstonia metallidurans).